The sequence spans 245 residues: 1-(5-phosphoribosyl)-5-[(5-phosphoribosylamino)methylideneamino] imidazole-4-carboxamide isomerase (245 aa).

Residue Asp7 is the Proton acceptor of the active site. Asp129 serves as the catalytic Proton donor.

This sequence belongs to the HisA/HisF family.

The protein resides in the cytoplasm. It carries out the reaction 1-(5-phospho-beta-D-ribosyl)-5-[(5-phospho-beta-D-ribosylamino)methylideneamino]imidazole-4-carboxamide = 5-[(5-phospho-1-deoxy-D-ribulos-1-ylimino)methylamino]-1-(5-phospho-beta-D-ribosyl)imidazole-4-carboxamide. The protein operates within amino-acid biosynthesis; L-histidine biosynthesis; L-histidine from 5-phospho-alpha-D-ribose 1-diphosphate: step 4/9. The chain is 1-(5-phosphoribosyl)-5-[(5-phosphoribosylamino)methylideneamino] imidazole-4-carboxamide isomerase from Shewanella sp. (strain W3-18-1).